The primary structure comprises 387 residues: 1-deoxy-D-xylulose 5-phosphate reductoisomerase (387 aa).

5 residues coordinate NADPH: threonine 10, glycine 11, isoleucine 13, asparagine 38, and asparagine 122. Lysine 123 lines the 1-deoxy-D-xylulose 5-phosphate pocket. Glutamate 124 is an NADPH binding site. Aspartate 148 provides a ligand contact to Mn(2+). Residues serine 149, glutamate 150, serine 174, and histidine 197 each coordinate 1-deoxy-D-xylulose 5-phosphate. Glutamate 150 contacts Mn(2+). Glycine 203 contacts NADPH. Residues serine 210, asparagine 215, lysine 216, and glutamate 219 each contribute to the 1-deoxy-D-xylulose 5-phosphate site. Residue glutamate 219 participates in Mn(2+) binding.

This sequence belongs to the DXR family. Mg(2+) is required as a cofactor. The cofactor is Mn(2+).

It carries out the reaction 2-C-methyl-D-erythritol 4-phosphate + NADP(+) = 1-deoxy-D-xylulose 5-phosphate + NADPH + H(+). Its pathway is isoprenoid biosynthesis; isopentenyl diphosphate biosynthesis via DXP pathway; isopentenyl diphosphate from 1-deoxy-D-xylulose 5-phosphate: step 1/6. Catalyzes the NADPH-dependent rearrangement and reduction of 1-deoxy-D-xylulose-5-phosphate (DXP) to 2-C-methyl-D-erythritol 4-phosphate (MEP). The chain is 1-deoxy-D-xylulose 5-phosphate reductoisomerase from Ehrlichia ruminantium (strain Gardel).